Reading from the N-terminus, the 505-residue chain is GMP synthase [glutamine-hydrolyzing] (505 aa).

A Glutamine amidotransferase type-1 domain is found at 3 to 190 (KVLVVNFGGQ…LRKIARISDV (188 aa)). Cys-80 acts as the Nucleophile in catalysis. Active-site residues include His-164 and Glu-166. One can recognise a GMPS ATP-PPase domain in the interval 191 to 380 (WRPEDQITRI…LGLPEDVVYR (190 aa)). 218–224 (SGGVDST) is a binding site for ATP.

It carries out the reaction XMP + L-glutamine + ATP + H2O = GMP + L-glutamate + AMP + diphosphate + 2 H(+). Its pathway is purine metabolism; GMP biosynthesis; GMP from XMP (L-Gln route): step 1/1. In terms of biological role, catalyzes the synthesis of GMP from XMP. The protein is GMP synthase [glutamine-hydrolyzing] of Pyrobaculum aerophilum (strain ATCC 51768 / DSM 7523 / JCM 9630 / CIP 104966 / NBRC 100827 / IM2).